We begin with the raw amino-acid sequence, 377 residues long: Cytochrome c peroxidase, mitochondrial (377 aa).

The transit peptide at 1 to 32 (MSFRAPNLIRSTVGRRAGQTLNLRSQVIRRRF) directs the protein to the mitochondrion. The active-site Proton acceptor is the His138. Residue His261 participates in heme b binding. Residue Trp277 is the Tryptophan radical intermediate of the active site.

This sequence belongs to the peroxidase family. Cytochrome c peroxidase subfamily. Forms a one-to-one complex with cytochrome c. Interacts with MID1 (via C-terminus); the interaction may contribute to cellular detoxification of radicals. It depends on heme b as a cofactor.

Its subcellular location is the mitochondrion matrix. The protein localises to the mitochondrion intermembrane space. The catalysed reaction is 2 Fe(II)-[cytochrome c] + H2O2 + 2 H(+) = 2 Fe(III)-[cytochrome c] + 2 H2O. Its function is as follows. Destroys radicals which are normally produced within the cells and which are toxic to biological systems. The chain is Cytochrome c peroxidase, mitochondrial (CCP1) from Cryptococcus neoformans var. grubii serotype A (strain H99 / ATCC 208821 / CBS 10515 / FGSC 9487) (Filobasidiella neoformans var. grubii).